A 295-amino-acid polypeptide reads, in one-letter code: Protein FAM221A (295 aa).

Positions 272 to 283 (QERLLKEKEQKR) are enriched in basic and acidic residues. The tract at residues 272–295 (QERLLKEKEQKRQKNSKPPTTNRP) is disordered.

Belongs to the FAM221 family.

This Xenopus tropicalis (Western clawed frog) protein is Protein FAM221A (fam221a).